The primary structure comprises 89 residues: Small ribosomal subunit protein uS17 (89 aa).

It belongs to the universal ribosomal protein uS17 family. Part of the 30S ribosomal subunit.

In terms of biological role, one of the primary rRNA binding proteins, it binds specifically to the 5'-end of 16S ribosomal RNA. The polypeptide is Small ribosomal subunit protein uS17 (Xanthomonas axonopodis pv. citri (strain 306)).